Reading from the N-terminus, the 168-residue chain is uncharacterized protein (168 aa).

This is an uncharacterized protein from Bacillus subtilis (strain 168).